Here is a 266-residue protein sequence, read N- to C-terminus: Putative carbamate hydrolase RutD (266 aa).

The protein belongs to the AB hydrolase superfamily. Hydrolase RutD family.

The enzyme catalyses carbamate + 2 H(+) = NH4(+) + CO2. Involved in pyrimidine catabolism. May facilitate the hydrolysis of carbamate, a reaction that can also occur spontaneously. The protein is Putative carbamate hydrolase RutD of Escherichia coli O127:H6 (strain E2348/69 / EPEC).